A 286-amino-acid chain; its full sequence is Alpha-ketoglutarate-dependent dioxygenase alkB homolog 3 (286 aa).

Positions 1 to 38 (MEDKRRRARVQGAWAGPAKSQATAQPAPTAENNLQQRP) are disordered. The segment covering 20–36 (SQATAQPAPTAENNLQQ) has biased composition (polar residues). Substrate-binding positions include Trp-115 and 141 to 143 (YTY). The Fe2OG dioxygenase domain maps to 172 to 278 (SFNSLLCNLY…RINLTFRTVY (107 aa)). (4R)-5-hydroxyleucine; alternate is present on Leu-177. Leu-177 is subject to (4R)-5-oxoleucine; alternate. 179–181 (NLY) contacts 2-oxoglutarate. His-191 and Asp-193 together coordinate Fe cation. Asp-194 lines the substrate pocket. Residue His-257 participates in Fe cation binding. 2-oxoglutarate contacts are provided by residues 269–275 (RINLTFR) and Arg-275.

It belongs to the alkB family. In terms of assembly, interacts with the ASCC complex composed of ASCC1, ASCC2 and ASCC3. Interacts directly with ASCC3, and is thereby recruited to the ASCC complex. Interacts with OTUD4; the interaction is direct. Interacts with USP7 and USP9X. It depends on Fe(2+) as a cofactor. Post-translationally, ubiquitinated; undergoes 'Lys-48'-linked polyubiquitination. OTUD4 promotes USP7 and USP9X-dependent deubiquitination of 'Lys-48'-polyubiquitinated ALKBH3 promoting the repair of alkylated DNA lesions.

The protein localises to the nucleus. It localises to the cytoplasm. The catalysed reaction is an N(1)-methyladenosine in mRNA + 2-oxoglutarate + O2 = an adenosine in mRNA + formaldehyde + succinate + CO2. It carries out the reaction a methylated nucleobase within DNA + 2-oxoglutarate + O2 = a nucleobase within DNA + formaldehyde + succinate + CO2. The enzyme catalyses an N(1)-methyl-2'-deoxyadenosine in single-stranded DNA + 2-oxoglutarate + O2 = a 2'-deoxyadenosine in single-stranded DNA + formaldehyde + succinate + CO2 + H(+). It catalyses the reaction an N(3)-methyl-2'-deoxycytidine in single-stranded DNA + 2-oxoglutarate + O2 = a 2'-deoxycytidine in single-stranded DNA + formaldehyde + succinate + CO2 + H(+). The catalysed reaction is a 3,N(4)-etheno-2'-deoxycytidine in single-stranded DNA + 2-oxoglutarate + O2 + H2O = a 2'-deoxycytidine in single-stranded DNA + glyoxal + succinate + CO2. Activated by ascorbate. Its function is as follows. Dioxygenase that mediates demethylation of DNA and RNA containing 1-methyladenosine (m1A). Repairs alkylated DNA containing 1-methyladenosine (m1A) and 3-methylcytosine (m3C) by oxidative demethylation. Has a strong preference for single-stranded DNA. Able to process alkylated m3C within double-stranded regions via its interaction with ASCC3, which promotes DNA unwinding to generate single-stranded substrate needed for ALKBH3. Can repair exocyclic 3,N4-ethenocytosine adducs in single-stranded DNA. Also acts on RNA. Demethylates N(1)-methyladenosine (m1A) RNA, an epigenetic internal modification of messenger RNAs (mRNAs) highly enriched within 5'-untranslated regions (UTRs) and in the vicinity of start codons. Requires molecular oxygen, alpha-ketoglutarate and iron. This is Alpha-ketoglutarate-dependent dioxygenase alkB homolog 3 from Bos taurus (Bovine).